We begin with the raw amino-acid sequence, 296 residues long: Pyridoxine/pyridoxal/pyridoxamine kinase (296 aa).

2 residues coordinate substrate: serine 23 and histidine 59. Residue aspartate 125 coordinates ATP. A Mg(2+)-binding site is contributed by tyrosine 136. Residues threonine 157, glutamate 162, threonine 195, 222–225 (HQRV), and threonine 232 contribute to the ATP site. Glutamate 162 provides a ligand contact to Mg(2+). Aspartate 234 is a substrate binding site.

The protein belongs to the pyridoxine kinase family. PdxK subfamily. In terms of assembly, homodimer. It depends on Mg(2+) as a cofactor.

It carries out the reaction pyridoxal + ATP = pyridoxal 5'-phosphate + ADP + H(+). It catalyses the reaction pyridoxine + ATP = pyridoxine 5'-phosphate + ADP + H(+). The catalysed reaction is pyridoxamine + ATP = pyridoxamine 5'-phosphate + ADP + H(+). It participates in cofactor metabolism; pyridoxal 5'-phosphate salvage; pyridoxal 5'-phosphate from pyridoxal: step 1/1. Its pathway is cofactor metabolism; pyridoxal 5'-phosphate salvage; pyridoxine 5'-phosphate from pyridoxine: step 1/1. It functions in the pathway cofactor metabolism; pyridoxal 5'-phosphate salvage; pyridoxamine 5'-phosphate from pyridoxamine: step 1/1. B6-vitamer kinase involved in the salvage pathway of pyridoxal 5'-phosphate (PLP). Catalyzes the phosphorylation of pyridoxine (PN), pyridoxal (PL), and pyridoxamine (PM), forming their respective 5'-phosphorylated esters, i.e. PNP, PLP and PMP. The polypeptide is Pyridoxine/pyridoxal/pyridoxamine kinase (Bordetella avium (strain 197N)).